A 125-amino-acid chain; its full sequence is Ino eighty subunit 5 (125 aa).

At Thr124 the chain carries Phosphothreonine.

In terms of assembly, component of the chromatin-remodeling INO80 complex, at least composed of ARP4, ARP5, ARP8, RVB1, RVB2, TAF14, NHP10, IES1, IES3, IES4, IES6, ACT1, IES2, IES5 and INO80.

The protein localises to the nucleus. This Saccharomyces cerevisiae (strain ATCC 204508 / S288c) (Baker's yeast) protein is Ino eighty subunit 5 (IES5).